Consider the following 171-residue polypeptide: NADH-quinone oxidoreductase subunit B (171 aa).

Residues Cys-39, Cys-40, Cys-105, and Cys-134 each coordinate [4Fe-4S] cluster.

Belongs to the complex I 20 kDa subunit family. In terms of assembly, NDH-1 is composed of 14 different subunits. Subunits NuoB, C, D, E, F, and G constitute the peripheral sector of the complex. Requires [4Fe-4S] cluster as cofactor.

It is found in the cell inner membrane. It carries out the reaction a quinone + NADH + 5 H(+)(in) = a quinol + NAD(+) + 4 H(+)(out). NDH-1 shuttles electrons from NADH, via FMN and iron-sulfur (Fe-S) centers, to quinones in the respiratory chain. The immediate electron acceptor for the enzyme in this species is believed to be ubiquinone. Couples the redox reaction to proton translocation (for every two electrons transferred, four hydrogen ions are translocated across the cytoplasmic membrane), and thus conserves the redox energy in a proton gradient. The chain is NADH-quinone oxidoreductase subunit B from Aliarcobacter butzleri (strain RM4018) (Arcobacter butzleri).